The primary structure comprises 308 residues: Protease HtpX homolog (308 aa).

2 helical membrane passes run 16–36 and 39–59; these read LLSL…IYAV and YLFG…VLMM. Residue histidine 149 coordinates Zn(2+). Glutamate 150 is a catalytic residue. Histidine 153 contacts Zn(2+). A run of 2 helical transmembrane segments spans residues 161 to 181 and 192 to 212; these read VIMA…TTLF and IILA…VLSV. Residue glutamate 217 coordinates Zn(2+).

Belongs to the peptidase M48B family. Requires Zn(2+) as cofactor.

The protein resides in the cell membrane. The chain is Protease HtpX homolog from Thermoplasma volcanium (strain ATCC 51530 / DSM 4299 / JCM 9571 / NBRC 15438 / GSS1).